The following is a 101-amino-acid chain: Urease subunit beta (101 aa).

This sequence belongs to the urease beta subunit family. As to quaternary structure, heterotrimer of UreA (gamma), UreB (beta) and UreC (alpha) subunits. Three heterotrimers associate to form the active enzyme.

The protein resides in the cytoplasm. It carries out the reaction urea + 2 H2O + H(+) = hydrogencarbonate + 2 NH4(+). The protein operates within nitrogen metabolism; urea degradation; CO(2) and NH(3) from urea (urease route): step 1/1. This Rhizobium leguminosarum bv. trifolii (strain WSM2304) protein is Urease subunit beta.